Reading from the N-terminus, the 157-residue chain is Oleosin-B1 (157 aa).

Residues 2–20 (GILRKKKHERNASFKSVLT) are polar. The hydrophobic stretch occupies residues 21–138 (SILATQAATF…AAPAAAPAAA (118 aa)). Transmembrane regions (helical) follow at residues 22–42 (ILATQAATFLLLISGVSLAGT), 45–65 (AFIATMPLFVVFSPILVPAGI), and 72–92 (TGLAAAGGAGATAVTIILWLY). 9 consecutive repeat copies span residues 119–122 (PRAA), 123–126 (PAAA), 127–130 (PAAA), 131–134 (PAAA), 135–138 (PAAA), 139–142 (PAPK), 143–146 (PAAA), 147–150 (PAPK), and 151–154 (PAAP). The tract at residues 119–122 (PRAA) is 9 X 4 AA tandem repeats of P-[AR]-[AP]-[AKP]. The interval 137-157 (AAPAPKPAAAPAPKPAAPPAL) is disordered. A compositionally biased stretch (pro residues) spans 138-157 (APAPKPAAAPAPKPAAPPAL).

This sequence belongs to the oleosin family. The full-length protein is found in the tapetal lipid bodies of immature anthers, the proteolytically cleaved C-terminal product is found on the coats of pollen grains. Highest expression is in microspores entering and undergoing mitosis. No expression is observed in male-sterile plants, green tissues or roots.

Its subcellular location is the lipid droplet. The protein localises to the membrane. Many of the major pollen coat proteins are derived from endoproteolytic cleavage of oleosin-like proteins. This chain is Oleosin-B1 (OlnB1), found in Brassica napus (Rape).